Reading from the N-terminus, the 368-residue chain is tRNA-specific 2-thiouridylase MnmA (368 aa).

Residues 11 to 18 (GMSGGVDS) and Met37 each bind ATP. An interaction with target base in tRNA region spans residues 97–99 (NPD). Cys102 (nucleophile) is an active-site residue. Cys102 and Cys199 are joined by a disulfide. ATP is bound at residue Gly127. The interval 149-151 (KDQ) is interaction with tRNA. Cys199 serves as the catalytic Cysteine persulfide intermediate. The segment at 311 to 312 (RY) is interaction with tRNA.

The protein belongs to the MnmA/TRMU family. Interacts with TusE.

Its subcellular location is the cytoplasm. It catalyses the reaction S-sulfanyl-L-cysteinyl-[protein] + uridine(34) in tRNA + AH2 + ATP = 2-thiouridine(34) in tRNA + L-cysteinyl-[protein] + A + AMP + diphosphate + H(+). Functionally, catalyzes the 2-thiolation of uridine at the wobble position (U34) of tRNA(Lys), tRNA(Glu) and tRNA(Gln), leading to the formation of s(2)U34, the first step of tRNA-mnm(5)s(2)U34 synthesis. Sulfur is provided by IscS, via a sulfur-relay system. Binds ATP and its substrate tRNAs. The chain is tRNA-specific 2-thiouridylase MnmA from Shigella boydii serotype 18 (strain CDC 3083-94 / BS512).